The primary structure comprises 599 residues: MKNIRNFSIIAHIDHGKSTLSDRIIQICGGLSDREMEAQVLDSMDLERERGITIKAQSVTLDYKASDGETYQLNFIDTPGHVDFSYEVSRSLAACEGALLVVDAGQGVEAQTLANCYTAMEMDLEVVPVLNKIDLPAADPERVADEIEDIVGIDAHDAVRCSAKTGVGVTDVLERLVRDIPPPEGDPDAPLQALIIDSWFDNYLGVVSLVRIKNGTMRKGDKIKVMSTGQVYNADRLGIFTPKQVDRTELKCGEVGWLVCAIKDILGAPVGDTLTAARNPADKALPGFKKVKPQVYAGLFPVSSDDYEAFRDALGKLSLNDASLFYEPESSTALGFGFRCGFLGLLHMEIIQERLEREYDLDLITTAPTVVYEVETTSKEVIYVDSPSKLPPLNNIQELREPIAECHMLLPQEFLGNVITLCVEKRGVQTNMVYHGKQVALTYEIPMAEVVLDFFDRLKSTSRGYASLDYNFKRFQASNMVRVDVLINGERVDALALITHNDNAPYRGRELVEKMKDLIPRQQFDIAIQAAIGNHIIARSTVKQLRKNVLAKCYGGDVSRKKKLLQKQKEGKKRMKQVGNVELPQEAFLAILHVGKDGK.

One can recognise a tr-type G domain in the interval 2–184 (KNIRNFSIIA…RLVRDIPPPE (183 aa)). GTP contacts are provided by residues 14–19 (DHGKST) and 131–134 (NKID).

It belongs to the TRAFAC class translation factor GTPase superfamily. Classic translation factor GTPase family. LepA subfamily.

The protein localises to the cell inner membrane. It catalyses the reaction GTP + H2O = GDP + phosphate + H(+). In terms of biological role, required for accurate and efficient protein synthesis under certain stress conditions. May act as a fidelity factor of the translation reaction, by catalyzing a one-codon backward translocation of tRNAs on improperly translocated ribosomes. Back-translocation proceeds from a post-translocation (POST) complex to a pre-translocation (PRE) complex, thus giving elongation factor G a second chance to translocate the tRNAs correctly. Binds to ribosomes in a GTP-dependent manner. This is Elongation factor 4 from Klebsiella pneumoniae subsp. pneumoniae (strain ATCC 700721 / MGH 78578).